A 238-amino-acid chain; its full sequence is Neuromodulin (238 aa).

The tract at residues 1 to 238 (MLCCMRRTKQ…EEPEADQEHA (238 aa)) is disordered. Residues cysteine 3 and cysteine 4 are each lipidated (S-palmitoyl cysteine). Positions 9–32 (KQVEKNDEDQKIEQDGIKPEDKAH) are enriched in basic and acidic residues. The IQ domain occupies 31–60 (AHKAATKIQASFRGHITRKKLKGEKKDDAQ). Phosphoserine; by PHK and PKC is present on serine 41. Positions 54–83 (EKKDDAQAAEAEANKKDEAPVADGVEKKGE) are enriched in basic and acidic residues. Low complexity predominate over residues 84 to 95 (GTTATEAAPATG). The segment covering 97–116 (KPDEPGKAGETPSEEKKGEG) has biased composition (basic and acidic residues). Over residues 119-130 (ATEQAAPQAPAS) the composition is skewed to low complexity. Polar residues predominate over residues 139–154 (ETESATKASTDNSPSS). 3 positions are modified to phosphoserine: serine 151, serine 153, and serine 154. Over residues 155-167 (KAEDAPAKEEPKQ) the composition is skewed to basic and acidic residues. The segment covering 168 to 199 (ADVPAAVTAAAATTPAAEDAAAKATAQPPTET) has biased composition (low complexity). Threonine 181 carries the phosphothreonine modification. A phosphoserine; by CK2 mark is found at serine 202 and serine 203. Basic and acidic residues predominate over residues 213–225 (DETKPKESARQDE). Residues 226-238 (GKEEEPEADQEHA) are compositionally biased toward acidic residues.

It belongs to the neuromodulin family. Identified in a complex containing FGFR4, NCAM1, CDH2, PLCG1, FRS2, SRC, SHC1, GAP43 and CTTN. Interacts (via IQ domain) with calmodulin. Binds calmodulin with a greater affinity in the absence of Ca(2+) than in its presence. Post-translationally, phosphorylated. Phosphorylation of this protein by a protein kinase C is specifically correlated with certain forms of synaptic plasticity. Palmitoylated by ZDHHC3. Palmitoylation is regulated by ARF6 and is essential for plasma membrane association and axonal and dendritic filopodia induction. Deacylated by LYPLA2.

It localises to the cell membrane. The protein localises to the cell projection. The protein resides in the growth cone membrane. It is found in the synapse. Its subcellular location is the filopodium membrane. It localises to the perikaryon. The protein localises to the dendrite. The protein resides in the axon. It is found in the cytoplasm. Functionally, this protein is associated with nerve growth. It is a major component of the motile 'growth cones' that form the tips of elongating axons. Plays a role in axonal and dendritic filopodia induction. The sequence is that of Neuromodulin (GAP43) from Macaca fascicularis (Crab-eating macaque).